The following is a 474-amino-acid chain: Glutamate--tRNA ligase (474 aa).

The 'HIGH' region motif lies at 10 to 20; that stretch reads PSPTGYLHIGG. Residues Cys107, Cys109, Cys134, and Asp136 each contribute to the Zn(2+) site. The 'KMSKS' region signature appears at 244 to 248; sequence RLSKR. Residue Lys247 coordinates ATP.

The protein belongs to the class-I aminoacyl-tRNA synthetase family. Glutamate--tRNA ligase type 1 subfamily. Monomer. Zn(2+) serves as cofactor.

It localises to the cytoplasm. The catalysed reaction is tRNA(Glu) + L-glutamate + ATP = L-glutamyl-tRNA(Glu) + AMP + diphosphate. Functionally, catalyzes the attachment of glutamate to tRNA(Glu) in a two-step reaction: glutamate is first activated by ATP to form Glu-AMP and then transferred to the acceptor end of tRNA(Glu). The sequence is that of Glutamate--tRNA ligase from Anaeromyxobacter dehalogenans (strain 2CP-C).